Consider the following 483-residue polypeptide: Altronate oxidoreductase (483 aa).

18 to 29 (IIQFGEGNFLRA) is a binding site for NAD(+).

The protein belongs to the mannitol dehydrogenase family. UxaB subfamily.

It carries out the reaction D-altronate + NAD(+) = keto-D-tagaturonate + NADH + H(+). The protein operates within carbohydrate metabolism; pentose and glucuronate interconversion. This chain is Altronate oxidoreductase (uxaB), found in Escherichia coli O157:H7.